We begin with the raw amino-acid sequence, 320 residues long: Polyprenal reductase 1 (320 aa).

Transmembrane regions (helical) follow at residues 5-25 (IVWL…LPLV), 64-84 (FFGH…AATW), 143-163 (MHIL…LSLC), 200-220 (PLMK…WGWI), 243-263 (IIPY…AEIV), and 266-286 (LGLL…FGFV).

Belongs to the steroid 5-alpha reductase family. Polyprenal reductase subfamily. In terms of tissue distribution, expressed in roots and flowers.

It localises to the cell membrane. It catalyses the reaction a di-trans,poly-cis-dolichal + NADP(+) = a di-trans,poly-cis-polyprenal + NADPH + H(+). It functions in the pathway protein modification; protein glycosylation. Its function is as follows. Plays a key role in early steps of protein N-linked glycosylation by being involved in the conversion of polyprenol into dolichol. Acts as a polyprenal reductase that mediates the reduction of polyprenal into dolichal in a NADP-dependent mechanism. Dolichols are required for the synthesis of dolichol-linked monosaccharides and the oligosaccharide precursor used for N-glycosylation. Involved in the regulation of plant growth and reproductive processes. This Arabidopsis thaliana (Mouse-ear cress) protein is Polyprenal reductase 1.